The primary structure comprises 186 residues: MQQVLQEPLIHWALRSFLAALFATAALSKLTGMEEFHGVVRNFRLLPDMASRAVAMVLPVAELAVAAGLMIPALAAPAALAAAALLGVFGLAIAVNVLRGRTQIDCGCFRNGMKQRISWAMVARNAVLTAMALGAAALLPAARPGGTADLATGMLAGSVLFLLYFSASMLGGLPARHPSTASVKGR.

5 consecutive transmembrane segments (helical) span residues 8 to 28 (PLIH…AALS), 54 to 74 (VAMV…IPAL), 75 to 95 (AAPA…AIAV), 119 to 139 (WAMV…AALL), and 153 to 173 (GMLA…LGGL).

The protein localises to the cell membrane. Its pathway is one-carbon metabolism; methylamine degradation. Its function is as follows. May be specifically involved in the processing, transport, and/or maturation of the MADH beta-subunit. In Paracoccus versutus (Thiobacillus versutus), this protein is Methylamine utilization protein MauE (mauE).